The primary structure comprises 285 residues: 3',5'-nucleoside bisphosphate phosphatase (285 aa).

Residues histidine 7, histidine 9, aspartate 14, histidine 39, glutamate 64, and histidine 75 each contribute to the Mn(2+) site. Residues aspartate 14 and histidine 39 each coordinate substrate. Substrate contacts are provided by residues 99-102 and 134-135; these read RLER and RT. 3 residues coordinate Mn(2+): histidine 191, aspartate 248, and histidine 250. Histidine 250 contacts substrate.

Belongs to the PHP family. In terms of assembly, monomer. Mn(2+) serves as cofactor.

The enzyme catalyses a ribonucleoside 3',5'-bisphosphate + H2O = a ribonucleoside 5'-phosphate + phosphate. Its function is as follows. Hydrolyzes 3',5'-bisphosphonucleosides (pGp, pCp, pUp, and pIp) to nucleoside 5'-phosphate and orthophosphate. Has similar catalytic efficiencies with all the bases. Also shows activity with ribonucleoside 2'-deoxyribonucleoside 3',5'-bisphosphates. Does not show activity with nucleoside 2',5'-bisphosphates. In Chromobacterium violaceum (strain ATCC 12472 / DSM 30191 / JCM 1249 / CCUG 213 / NBRC 12614 / NCIMB 9131 / NCTC 9757 / MK), this protein is 3',5'-nucleoside bisphosphate phosphatase.